Reading from the N-terminus, the 279-residue chain is Large ribosomal subunit protein uL2 (279 aa).

Disordered regions lie at residues 1–43 (MGIK…TAGR) and 207–279 (KAGR…PGKH). A compositionally biased stretch (polar residues) spans 8-22 (PTTNGRRNMTASDFS). A compositionally biased stretch (basic and acidic residues) spans 23–33 (EITKTKPEKSL). Positions 34–43 (LDSQSHTAGR) are enriched in polar residues. Basic residues-rich tracts occupy residues 209–219 (GRTRWQGKRPT) and 254–279 (TLGK…PGKH).

The protein belongs to the universal ribosomal protein uL2 family. As to quaternary structure, part of the 50S ribosomal subunit. Forms a bridge to the 30S subunit in the 70S ribosome.

Its function is as follows. One of the primary rRNA binding proteins. Required for association of the 30S and 50S subunits to form the 70S ribosome, for tRNA binding and peptide bond formation. It has been suggested to have peptidyltransferase activity; this is somewhat controversial. Makes several contacts with the 16S rRNA in the 70S ribosome. This is Large ribosomal subunit protein uL2 from Lactiplantibacillus plantarum (strain ATCC BAA-793 / NCIMB 8826 / WCFS1) (Lactobacillus plantarum).